The primary structure comprises 103 residues: MAKNEKIRIRLKSYDHKLLDFSAGKIVETAKKAGSQVSGPVPLPTEKQVVTILRAVHKYKYSREQFEIRTHKRLIDIANPTPKTVDSLMRLDLPAGVDIEIKL.

The protein belongs to the universal ribosomal protein uS10 family. As to quaternary structure, part of the 30S ribosomal subunit.

Functionally, involved in the binding of tRNA to the ribosomes. In Clostridioides difficile (strain 630) (Peptoclostridium difficile), this protein is Small ribosomal subunit protein uS10.